Consider the following 102-residue polypeptide: Large ribosomal subunit protein uL24 (102 aa).

It belongs to the universal ribosomal protein uL24 family. In terms of assembly, part of the 50S ribosomal subunit.

One of two assembly initiator proteins, it binds directly to the 5'-end of the 23S rRNA, where it nucleates assembly of the 50S subunit. Functionally, one of the proteins that surrounds the polypeptide exit tunnel on the outside of the subunit. The protein is Large ribosomal subunit protein uL24 of Burkholderia ambifaria (strain ATCC BAA-244 / DSM 16087 / CCUG 44356 / LMG 19182 / AMMD) (Burkholderia cepacia (strain AMMD)).